An 88-amino-acid chain; its full sequence is CRISPR-associated endoribonuclease Cas2 3 (88 aa).

Asp9 serves as a coordination point for Mg(2+).

The protein belongs to the CRISPR-associated endoribonuclease Cas2 protein family. Homodimer, forms a heterotetramer with a Cas1 homodimer. It depends on Mg(2+) as a cofactor.

CRISPR (clustered regularly interspaced short palindromic repeat), is an adaptive immune system that provides protection against mobile genetic elements (viruses, transposable elements and conjugative plasmids). CRISPR clusters contain sequences complementary to antecedent mobile elements and target invading nucleic acids. CRISPR clusters are transcribed and processed into CRISPR RNA (crRNA). Functions as a ssRNA-specific endoribonuclease. Involved in the integration of spacer DNA into the CRISPR cassette. This chain is CRISPR-associated endoribonuclease Cas2 3, found in Thermodesulfovibrio yellowstonii (strain ATCC 51303 / DSM 11347 / YP87).